A 76-amino-acid polypeptide reads, in one-letter code: uncharacterized protein (76 aa).

3 helical membrane passes run 1-21, 35-55, and 56-76; these read MTAI…HLQL, CFDI…LLII, and NNKF…NTMI.

It is found in the cell membrane. This is an uncharacterized protein from Borreliella burgdorferi (strain ATCC 35210 / DSM 4680 / CIP 102532 / B31) (Borrelia burgdorferi).